Reading from the N-terminus, the 379-residue chain is UDP-4-amino-4-deoxy-L-arabinose--oxoglutarate aminotransferase (379 aa).

Lys-183 is modified (N6-(pyridoxal phosphate)lysine).

This sequence belongs to the DegT/DnrJ/EryC1 family. ArnB subfamily. In terms of assembly, homodimer. Requires pyridoxal 5'-phosphate as cofactor.

The enzyme catalyses UDP-4-amino-4-deoxy-beta-L-arabinose + 2-oxoglutarate = UDP-beta-L-threo-pentopyranos-4-ulose + L-glutamate. Its pathway is nucleotide-sugar biosynthesis; UDP-4-deoxy-4-formamido-beta-L-arabinose biosynthesis; UDP-4-deoxy-4-formamido-beta-L-arabinose from UDP-alpha-D-glucuronate: step 2/3. It functions in the pathway bacterial outer membrane biogenesis; lipopolysaccharide biosynthesis. Functionally, catalyzes the conversion of UDP-4-keto-arabinose (UDP-Ara4O) to UDP-4-amino-4-deoxy-L-arabinose (UDP-L-Ara4N). The modified arabinose is attached to lipid A and is required for resistance to polymyxin and cationic antimicrobial peptides. In Pseudomonas fluorescens (strain ATCC BAA-477 / NRRL B-23932 / Pf-5), this protein is UDP-4-amino-4-deoxy-L-arabinose--oxoglutarate aminotransferase.